A 159-amino-acid polypeptide reads, in one-letter code: Ribosomal RNA large subunit methyltransferase H (159 aa).

S-adenosyl-L-methionine-binding positions include Leu-76, Gly-108, and 127-132 (LSKMTY).

The protein belongs to the RNA methyltransferase RlmH family. Homodimer.

The protein localises to the cytoplasm. It catalyses the reaction pseudouridine(1915) in 23S rRNA + S-adenosyl-L-methionine = N(3)-methylpseudouridine(1915) in 23S rRNA + S-adenosyl-L-homocysteine + H(+). Its function is as follows. Specifically methylates the pseudouridine at position 1915 (m3Psi1915) in 23S rRNA. This is Ribosomal RNA large subunit methyltransferase H from Ruminiclostridium cellulolyticum (strain ATCC 35319 / DSM 5812 / JCM 6584 / H10) (Clostridium cellulolyticum).